Reading from the N-terminus, the 351-residue chain is Translation initiation factor eIF2B subunit beta (351 aa).

Belongs to the eIF-2B alpha/beta/delta subunits family. As to quaternary structure, component of the translation initiation factor 2B (eIF2B) complex which is a heterodecamer of two sets of five different subunits: alpha, beta, gamma, delta and epsilon. Subunits alpha, beta and delta comprise a regulatory subcomplex and subunits epsilon and gamma comprise a catalytic subcomplex. Within the complex, the hexameric regulatory complex resides at the center, with the two heterodimeric catalytic subcomplexes bound on opposite sides.

The protein localises to the cytoplasm. It is found in the cytosol. With respect to regulation, activated by the chemical integrated stress response (ISR) inhibitor ISRIB which stimulates guanine nucleotide exchange factor activity for both phosphorylated and unphosphorylated eIF2. Acts as a component of the translation initiation factor 2B (eIF2B) complex, which catalyzes the exchange of GDP for GTP on eukaryotic initiation factor 2 (eIF2) gamma subunit. Its guanine nucleotide exchange factor activity is repressed when bound to eIF2 complex phosphorylated on the alpha subunit, thereby limiting the amount of methionyl-initiator methionine tRNA available to the ribosome and consequently global translation is repressed. In Bos taurus (Bovine), this protein is Translation initiation factor eIF2B subunit beta (EIF2B2).